The primary structure comprises 643 residues: Phosphomethylpyrimidine synthase (643 aa).

Substrate contacts are provided by residues asparagine 248, methionine 277, tyrosine 306, histidine 342, 362 to 364 (SRG), 403 to 406 (DGLR), and glutamate 442. Residue histidine 446 coordinates Zn(2+). Tyrosine 469 is a substrate binding site. Histidine 510 is a Zn(2+) binding site. The [4Fe-4S] cluster site is built by cysteine 590, cysteine 593, and cysteine 598.

It belongs to the ThiC family. As to quaternary structure, homodimer. [4Fe-4S] cluster serves as cofactor.

It carries out the reaction 5-amino-1-(5-phospho-beta-D-ribosyl)imidazole + S-adenosyl-L-methionine = 4-amino-2-methyl-5-(phosphooxymethyl)pyrimidine + CO + 5'-deoxyadenosine + formate + L-methionine + 3 H(+). The protein operates within cofactor biosynthesis; thiamine diphosphate biosynthesis. Catalyzes the synthesis of the hydroxymethylpyrimidine phosphate (HMP-P) moiety of thiamine from aminoimidazole ribotide (AIR) in a radical S-adenosyl-L-methionine (SAM)-dependent reaction. The polypeptide is Phosphomethylpyrimidine synthase (Burkholderia mallei (strain NCTC 10247)).